The primary structure comprises 257 residues: Zinc import ATP-binding protein ZnuC (257 aa).

The 216-residue stretch at 6–221 folds into the ABC transporter domain; the sequence is IRLEQVGVSF…PAFVELFGQN (216 aa). 38–45 contacts ATP; sequence GPNGAGKT.

Belongs to the ABC transporter superfamily. Zinc importer (TC 3.A.1.15.5) family. In terms of assembly, the complex is composed of two ATP-binding proteins (ZnuC), two transmembrane proteins (ZnuB) and a solute-binding protein (ZnuA).

The protein localises to the cell inner membrane. The catalysed reaction is Zn(2+)(out) + ATP(in) + H2O(in) = Zn(2+)(in) + ADP(in) + phosphate(in) + H(+)(in). Its function is as follows. Part of the ABC transporter complex ZnuABC involved in zinc import. Responsible for energy coupling to the transport system. The protein is Zinc import ATP-binding protein ZnuC of Pseudomonas entomophila (strain L48).